The sequence spans 458 residues: Transmembrane protein adipocyte-associated 1 homolog (458 aa).

Asparagine 21 and asparagine 45 each carry an N-linked (GlcNAc...) asparagine glycan. A run of 7 helical transmembrane segments spans residues 81–101 (VILVPNILFLLFLILKCGSVI), 114–134 (AFTLLVYVSTLVNIIRCAYSM), 152–172 (IIIKFFYLTAEFCALTFGLLF), 181–201 (ILIALLGTLLVSIPHTAVQVI), 225–245 (FLFWVFSSAVLALVYFFIMCL), 263–283 (LIYCMMMVVLNVLQSMGAALI), and 291–311 (LCFVGVSTYVYFVLYPPIIYF). Asparagine 323 and asparagine 324 each carry an N-linked (GlcNAc...) asparagine glycan. The disordered stretch occupies residues 409–458 (RTGSDDYAHHRDSMLSEPSTGTTTRHLKGLGPQGSLVFEDDPSSLTSLRM). The span at 411–422 (GSDDYAHHRDSM) shows a compositional bias: basic and acidic residues.

The protein belongs to the UPF0359 family.

The protein localises to the membrane. The protein is Transmembrane protein adipocyte-associated 1 homolog (tpra-1) of Caenorhabditis elegans.